We begin with the raw amino-acid sequence, 388 residues long: (S)-8-oxocitronellyl enol synthase (388 aa).

NADP(+) contacts are provided by residues 38 to 40 (TGI), 66 to 67 (RR), 84 to 85 (DV), 108 to 109 (SW), and Gln142. Catalysis depends on residues Lys146 and Tyr178. 2 residues coordinate substrate: Lys146 and Tyr178. NADP(+) is bound by residues Tyr178, Val204, and 211–213 (SMM). Ser349 serves as a coordination point for substrate.

This sequence belongs to the short-chain dehydrogenases/reductases (SDR) family. Highly divergent. Homodimer. As to expression, expressed in internal phloem-associated parenchyma (IPAP) cells.

It localises to the cytoplasm. It is found in the cytosol. It catalyses the reaction (S)-8-oxocitronellyl enol + NADP(+) = (6E)-8-oxogeranial + NADPH + H(+). The enzyme catalyses (S)-8-oxocitronellyl enol + NAD(+) = (6E)-8-oxogeranial + NADH + H(+). In terms of biological role, iridoid synthase that catalyzes the first step in generation of the iridoid ring scaffold using the linear monoterpene (6E)-8-oxogeranial as substrate. Iridoids comprise a large family of distinctive bicyclic monoterpenes that possess a wide range of pharmacological activities, including anticancer, anti-inflammatory, antifungal and antibacterial activities. The protein is (S)-8-oxocitronellyl enol synthase of Catharanthus roseus (Madagascar periwinkle).